The sequence spans 283 residues: tRNA-cytidine(32) 2-sulfurtransferase (283 aa).

The PP-loop motif signature appears at 37–42 (SGGKDS). C112, C115, and C203 together coordinate [4Fe-4S] cluster.

It belongs to the TtcA family. Homodimer. Mg(2+) is required as a cofactor. [4Fe-4S] cluster serves as cofactor.

The protein resides in the cytoplasm. It catalyses the reaction cytidine(32) in tRNA + S-sulfanyl-L-cysteinyl-[cysteine desulfurase] + AH2 + ATP = 2-thiocytidine(32) in tRNA + L-cysteinyl-[cysteine desulfurase] + A + AMP + diphosphate + H(+). The protein operates within tRNA modification. Functionally, catalyzes the ATP-dependent 2-thiolation of cytidine in position 32 of tRNA, to form 2-thiocytidine (s(2)C32). The sulfur atoms are provided by the cysteine/cysteine desulfurase (IscS) system. The chain is tRNA-cytidine(32) 2-sulfurtransferase from Legionella pneumophila (strain Corby).